The sequence spans 439 residues: Damage-control phosphatase ARMT1 (439 aa).

Ala-2 carries the post-translational modification N-acetylalanine. Ser-4 carries the phosphoserine modification. Lys-40 carries the N6-acetyllysine modification. The Mn(2+) site is built by Asp-251 and Asn-252. 251–252 (DN) is a substrate binding site. Positions 256 and 289 each coordinate S-adenosyl-L-methionine. Asp-289 provides a ligand contact to Mn(2+). Substrate contacts are provided by residues 365-369 (DLNYR) and Lys-402. Positions 399–402 (RTLK) match the Subfamily III RTxK motif motif.

Belongs to the damage-control phosphatase family. Sugar phosphate phosphatase III subfamily. Mn(2+) serves as cofactor. Ni(2+) is required as a cofactor. Post-translationally, automethylated.

It catalyses the reaction beta-D-fructose 1-phosphate + H2O = D-fructose + phosphate. The enzyme catalyses beta-D-fructose 6-phosphate = dihydroxyacetone + D-glyceraldehyde 3-phosphate. The catalysed reaction is L-glutamyl-[protein] + S-adenosyl-L-methionine = [protein]-L-glutamate 5-O-methyl ester + S-adenosyl-L-homocysteine. In terms of biological role, metal-dependent phosphatase that shows phosphatase activity against several substrates, including fructose-1-phosphate and fructose-6-phosphate. Its preference for fructose-1-phosphate, a strong glycating agent that causes DNA damage rather than a canonical yeast metabolite, suggests a damage-control function in hexose phosphate metabolism. Has also been shown to have O-methyltransferase activity that methylates glutamate residues of target proteins to form gamma-glutamyl methyl ester residues. Possibly methylates PCNA, suggesting it is involved in the DNA damage response. The protein is Damage-control phosphatase ARMT1 of Mus musculus (Mouse).